Consider the following 95-residue polypeptide: Auxin-responsive protein SAUR27 (95 aa).

It belongs to the ARG7 family. Interacts with PP2C-D1. In terms of tissue distribution, higher expression in thermo-responsive cultivars (e.g. cv. Alst-1, cv. Ang-0 and cv. Com-0) than in low thermo-responsive cultivars (e.g. cv. Dja-1, cv. El-0 and cv. Kon).

The protein localises to the cell membrane. Its function is as follows. Functions as a positive effector of cell expansion through modulation of auxin transport. Involved in thermo-responsiveness of plant architecture. Enhances plasma membrane H(+)-ATPase. This Arabidopsis thaliana (Mouse-ear cress) protein is Auxin-responsive protein SAUR27.